The following is a 255-amino-acid chain: Zinc-finger homeodomain protein 6 (255 aa).

Positions 1-35 (MEFRGHDEPVDEMGVAYGRTPPSSSSSPAASASAG) are disordered. Residues 21–35 (PPSSSSSPAASASAG) are compositionally biased toward low complexity. The segment at 45–93 (YHECLRNHAAAMGGHVVDGCREFMPMPGDAADALKCAACGCHRSFHRKD) adopts a ZF-HD dimerization-type; degenerate zinc-finger fold. Positions 106-126 (PSPPTPRVPLLMPPPQPQPHP) are enriched in pro residues. Disordered regions lie at residues 106 to 181 (PSPP…KFTP) and 226 to 255 (NNKS…QQQQ). The span at 139-153 (YHHTPSGSGGTTTES) shows a compositional bias: low complexity. The segment at residues 172 to 235 (RKRFRTKFTP…NNKSSIGSSS (64 aa)) is a DNA-binding region (homeobox). Over residues 240 to 255 (RRQPQEQQSQQQQQQQ) the composition is skewed to low complexity.

As to quaternary structure, homo- and heterodimer with other ZFHD proteins.

It is found in the nucleus. Functionally, putative transcription factor. This chain is Zinc-finger homeodomain protein 6 (ZHD6), found in Oryza sativa subsp. japonica (Rice).